The primary structure comprises 257 residues: Outer membrane protein Omp26La (257 aa).

The signal sequence occupies residues 1–19; sequence MKKIALFITASLIAGNTLA.

It belongs to the MipA/OmpV family.

It localises to the cell outer membrane. This Vibrio anguillarum (Listonella anguillarum) protein is Outer membrane protein Omp26La.